A 544-amino-acid polypeptide reads, in one-letter code: Zinc finger and BTB domain-containing protein 7B (544 aa).

The region spanning C34–S115 is the BTB domain. Residue S150 is modified to Phosphoserine. Disordered stretches follow at residues T171–N221 and G244–I314. Residues P186–P200 are compositionally biased toward pro residues. Basic residues predominate over residues V201–K210. An N6-acetyllysine; by EP300; alternate mark is found at K210 and K216. Residues K210 and K216 each participate in a glycyl lysine isopeptide (Lys-Gly) (interchain with G-Cter in ubiquitin); alternate cross-link. Positions F277–M286 are enriched in acidic residues. K339 carries the post-translational modification N6-acetyllysine; by EP300; alternate. Residue K339 forms a Glycyl lysine isopeptide (Lys-Gly) (interchain with G-Cter in ubiquitin); alternate linkage. Residues M348–R404 are required for interaction with and acetylation by EP300. A C2H2-type 1 zinc finger spans residues Q350–H372. T373 carries the post-translational modification Phosphothreonine. 2 C2H2-type zinc fingers span residues F378 to H400 and Y406 to H428. Residues Y434–C458 form a C2H2-type 4; atypical zinc finger. 2 disordered regions span residues R465–N493 and W507–S544. 2 stretches are compositionally biased toward low complexity: residues A511–P522 and T531–S544.

In terms of assembly, homodimerizes. Interacts with NCL, NEDD4 and YBX1. Interacts with HNRNPU (via RNA-binding RGG-box region); the interaction facilitates the recruitment of long non-coding RNA Blnc1 by ZBTB7B. Interacts with HDAC4 and HDAC5; the interaction allows the recruitment of HDAC4 and HDAC5 on CD8 loci for deacetylation and possible inhibition of CD8 genes expression. Acetylated directly and specifically by EP300. EP300-mediated acetylation of Lys-210, Lys-216 and Lys-339 stabilizes the protein by antagonizing ubiquitin conjugation. In terms of processing, ubiquitinated, leading to proteasomal degradation. Competes with acetylation on Lys-210, Lys-216 and Lys-339. In terms of tissue distribution, widely expressed, with a higher level in skin. Expressed in thymus. Restricted to CD4 cells (mature single positive CD4(+) and intermediate CD4(+)CD8(+) cells). Expressed in the luminal epithelial cells in the mammary glands where is up-regulated at late pregnancy and lactation. Expression is enriched in brown fat.

The protein localises to the nucleus. Functionally, transcription regulator that acts as a key regulator of lineage commitment of immature T-cell precursors. Exerts distinct biological functions in the mammary epithelial cells and T cells in a tissue-specific manner. Necessary and sufficient for commitment of CD4 lineage, while its absence causes CD8 commitment. Development of immature T-cell precursors (thymocytes) to either the CD4 helper or CD8 killer T-cell lineages correlates precisely with their T-cell receptor specificity for major histocompatibility complex class II or class I molecules, respectively. Cross-antagonism between ZBTB7B and CBF complexes are determinative to CD4 versus CD8 cell fate decision. Suppresses RUNX3 expression and imposes CD4+ lineage fate by inducing the SOCS suppressors of cytokine signaling. induces, as a transcriptional activator, SOCS genes expression which represses RUNX3 expression and promotes the CD4+ lineage fate. During CD4 lineage commitment, associates with multiple sites at the CD8 locus, acting as a negative regulator of the CD8 promoter and enhancers by epigenetic silencing through the recruitment of class II histone deacetylases, such as HDAC4 and HDAC5, to these loci. Regulates the development of IL17-producing CD1d-restricted naural killer (NK) T cells. Also functions as an important metabolic regulator in the lactating mammary glands. Critical feed-forward regulator of insulin signaling in mammary gland lactation, directly regulates expression of insulin receptor substrate-1 (IRS-1) and insulin-induced Akt-mTOR-SREBP signaling. Transcriptional repressor of the collagen COL1A1 and COL1A2 genes. May also function as a repressor of fibronectin and possibly other extracellular matrix genes. Potent driver of brown fat development, thermogenesis and cold-induced beige fat formation. Recruits the brown fat lncRNA 1 (Blnc1):HNRNPU ribonucleoprotein complex to activate thermogenic gene expression in brown and beige adipocytes. This is Zinc finger and BTB domain-containing protein 7B from Mus musculus (Mouse).